The following is a 370-amino-acid chain: Putative F-box protein At1g46984 (370 aa).

An F-box domain is found at 18–64 (YTQLSTLPIDLIIEILSRLPMNSIAICRLVSKQWASILQSSDFTESF).

The protein is Putative F-box protein At1g46984 of Arabidopsis thaliana (Mouse-ear cress).